We begin with the raw amino-acid sequence, 313 residues long: Sororin-like protein 1 (313 aa).

An FGF motif motif is present at residues 44–46 (FGF). The disordered stretch occupies residues 105 to 287 (ADENQQSVPT…NDNLKELTPG (183 aa)). A compositionally biased stretch (polar residues) spans 107–118 (ENQQSVPTVSIA). The segment covering 123–134 (PELPPSSSPLLP) has biased composition (pro residues). Over residues 135-154 (PNGSESSSPIPLSLLSTSSL) the composition is skewed to low complexity. Over residues 155–170 (QQRKITPSNLSNTSKP) the composition is skewed to polar residues. Over residues 184-196 (HGHHLTRLRKKRR) the composition is skewed to basic residues. Residues 249–264 (EKKILKTYHSQDKDTA) show a composition bias toward basic and acidic residues. The C-terminal Sororin domain stretch occupies residues 288 to 310 (KKEYLKSIKKYFQDVDDYQLHVV).

It belongs to the sororin family. Interacts with Pds5 and Psm3.

The protein localises to the nucleus. In terms of biological role, regulator of sister chromatid cohesion in mitosis stabilizing cohesin complex association with chromatin. Antagonizes the action of wpl1 which stimulates cohesin dissociation from chromatin. Cohesion ensures that chromosome partitioning is accurate in dividing cells and may play an important role in DNA repair. In Schizosaccharomyces pombe (strain 972 / ATCC 24843) (Fission yeast), this protein is Sororin-like protein 1.